Reading from the N-terminus, the 313-residue chain is Methylenetetrahydrofolate dehydrogenase [NAD(+)] (313 aa).

Cys-152 is an active-site residue. NAD(+) is bound by residues 187 to 188 (RS), 210 to 211 (DI), and 270 to 272 (FAG).

This sequence belongs to the tetrahydrofolate dehydrogenase/cyclohydrolase family. Homodimer.

The catalysed reaction is (6R)-5,10-methylene-5,6,7,8-tetrahydrofolate + NAD(+) = (6R)-5,10-methenyltetrahydrofolate + NADH. Its pathway is one-carbon metabolism; tetrahydrofolate interconversion. Functionally, catalyzes oxidation of cytoplasmic one-carbon units for purine biosynthesis. The polypeptide is Methylenetetrahydrofolate dehydrogenase [NAD(+)] (thfA) (Dictyostelium discoideum (Social amoeba)).